We begin with the raw amino-acid sequence, 393 residues long: Formate-dependent phosphoribosylglycinamide formyltransferase (393 aa).

N(1)-(5-phospho-beta-D-ribosyl)glycinamide is bound by residues 22-23 (EL) and Glu82. ATP contacts are provided by residues Arg114, Lys155, 160-165 (SSGKGQ), 195-198 (EGFV), and Glu203. One can recognise an ATP-grasp domain in the interval 119 to 308 (RLAAEELGLP…EFALHARAIL (190 aa)). Residues Glu267 and Glu279 each coordinate Mg(2+). Residues Asp286, Lys356, and 363-364 (RR) contribute to the N(1)-(5-phospho-beta-D-ribosyl)glycinamide site.

This sequence belongs to the PurK/PurT family. As to quaternary structure, homodimer.

It catalyses the reaction N(1)-(5-phospho-beta-D-ribosyl)glycinamide + formate + ATP = N(2)-formyl-N(1)-(5-phospho-beta-D-ribosyl)glycinamide + ADP + phosphate + H(+). Its pathway is purine metabolism; IMP biosynthesis via de novo pathway; N(2)-formyl-N(1)-(5-phospho-D-ribosyl)glycinamide from N(1)-(5-phospho-D-ribosyl)glycinamide (formate route): step 1/1. Involved in the de novo purine biosynthesis. Catalyzes the transfer of formate to 5-phospho-ribosyl-glycinamide (GAR), producing 5-phospho-ribosyl-N-formylglycinamide (FGAR). Formate is provided by PurU via hydrolysis of 10-formyl-tetrahydrofolate. This chain is Formate-dependent phosphoribosylglycinamide formyltransferase, found in Nitratidesulfovibrio vulgaris (strain DSM 19637 / Miyazaki F) (Desulfovibrio vulgaris).